The chain runs to 493 residues: Cytochrome P450 monooxygenase olcG (493 aa).

A helical transmembrane segment spans residues 15 to 35 (GILATGALVIFVALFLATFQF). C429 is a heme binding site.

The protein belongs to the cytochrome P450 family. The cofactor is heme.

It is found in the membrane. It functions in the pathway secondary metabolite biosynthesis; terpenoid biosynthesis. In terms of biological role, cytochrome P450 monooxygenase; part of the gene cluster that mediates the biosynthesis of 15-deoxyoxalicine B. The first step of the pathway is the synthesis of nicotinyl-CoA from nicotinic acid by the nicotinic acid-CoA ligase olcI. Nicotinyl-CoA is then a substrate of polyketide synthase olcA to produce 4-hydroxy-6-(3-pyridinyl)-2H-pyran-2-one (HPPO) which is further prenylated by the polyprenyl transferase olcH to yield geranylgeranyl-HPPO. Geranylgeranyl pyrophosphate is provided by the cluster-specific geranylgeranyl pyrophosphate synthase olcC. The FAD-dependent monooxygenase olcE catalyzes the epoxidation of geranylgeranyl-HPPO and the terpene cyclase olcD catalyzes the cyclization of the terpenoid component, resulting in the formation of the tricyclic terpene moiety seen in predecaturin E. The cytochrome P450 monooxygenase then catalyzes the allylic oxidation of predecaturin E, which is followed by spirocylization with concomitant loss of one molecule of water to form decaturin E. Decaturin E is the substrate of the cytochrome P450 monooxygenase olcJ which hydroxylates it at the C-29 position to form decaturin F. The short-chain dehydrogenase/reductase olcF may catalyze the oxidation of decaturin F to generate the 29-hydroxyl-27-one intermediate, and subsequent hemiacetal formation probably leads to the formation of decaturin C. The dioxygenase olcK may be a peroxisomal enzyme that catalyzes the hydroxylation of decaturin C into decaturin A once decaturin C is shuttled into the peroxisome by the MFS transporter olcL. Finally the cytochrome P450 monooxygenase olcB catalyzes the oxidative rearrangement to yield 15-deoxyoxalicine B. In the absence of olcJ, decaturin E may be shunted to a pathway in which it is oxidized to a ketone, possibly by olcF, to form decaturin D, which undergoes further allylic oxidation to yield decaturin G. Moreover, in the absence of oclK or oclL, oclB can convert decaturin C into 15-deoxyoxalicine A. This Penicillium canescens protein is Cytochrome P450 monooxygenase olcG.